Consider the following 459-residue polypeptide: Exodeoxyribonuclease 7 large subunit (459 aa).

The protein belongs to the XseA family. As to quaternary structure, heterooligomer composed of large and small subunits.

The protein resides in the cytoplasm. It carries out the reaction Exonucleolytic cleavage in either 5'- to 3'- or 3'- to 5'-direction to yield nucleoside 5'-phosphates.. Its function is as follows. Bidirectionally degrades single-stranded DNA into large acid-insoluble oligonucleotides, which are then degraded further into small acid-soluble oligonucleotides. This chain is Exodeoxyribonuclease 7 large subunit, found in Pseudomonas aeruginosa (strain UCBPP-PA14).